Reading from the N-terminus, the 36-residue chain is Zinc metalloproteinase-disintegrin-like VaH1 (36 aa).

The Peptidase M12B domain occupies 1-36 (MVTKYSSIFMSPILSNPPILYFSDCSREXYQKXLTN).

Belongs to the venom metalloproteinase (M12B) family. P-III subfamily. P-IIIa sub-subfamily. As to quaternary structure, monomer. Requires Zn(2+) as cofactor. In terms of processing, the N-terminus is blocked. Post-translationally, glycosylated. Expressed by the venom gland.

The protein resides in the secreted. Its activity is regulated as follows. Inhibited by EDTA, but not inhibited by iodoacetamide, PMSF and pepstatin A. Functionally, snake venom zinc metalloprotease that exhibits strong hemorrhagic activity. It also degrades alpha-chain of fibrinogen (FGA), but not the beta- and the gamma-chains. Possesses potent azocaseinolytic activity and cleaves insulin B-chain, hydrolyzing it at positions Ala(14)-Leu(15), followed by Tyr(16)-Leu(17) and His(10)-Leu(11). In vivo, subcutaneous injection into mice induces strong hemorrhage. This is Zinc metalloproteinase-disintegrin-like VaH1 from Vipera ammodytes ammodytes (Western sand viper).